A 266-amino-acid polypeptide reads, in one-letter code: Methylsterol monooxygenase 2-2 (266 aa).

The next 3 membrane-spanning stretches (helical) occupy residues 24–44 (IGSF…FIFL), 71–91 (RLLL…YPVF), and 107–127 (EVSA…YWGH). One can recognise a Fatty acid hydroxylase domain in the interval 113–247 (LFYFIIEDFV…FVYMDWIFGT (135 aa)). Positions 127-131 (HRILH) match the Histidine box-1 motif. The Histidine box-2 signature appears at 140–144 (HSVHH). The helical transmembrane segment at 162 to 182 (ILFLGFATIVGPALTGPHLIT) threads the bilayer. Positions 219–225 (FHDYHHR) match the Histidine box-3 motif.

Belongs to the sterol desaturase family. Requires Fe cation as cofactor. In terms of tissue distribution, expressed in shoots, roots, siliques and flowers, and, slightly, in developing seeds.

Its subcellular location is the endoplasmic reticulum membrane. It catalyses the reaction 4,4-dimethyl-5alpha-cholest-7-en-3beta-ol + 6 Fe(II)-[cytochrome b5] + 3 O2 + 5 H(+) = 4alpha-carboxy-4beta-methyl-5alpha-cholest-7-ene-3beta-ol + 6 Fe(III)-[cytochrome b5] + 4 H2O. The enzyme catalyses 24-methylidenelophenol + 6 Fe(II)-[cytochrome b5] + 3 O2 + 5 H(+) = 4alpha-carboxy-ergosta-7,24(24(1))-dien-3beta-ol + 6 Fe(III)-[cytochrome b5] + 4 H2O. Its function is as follows. Non-heme iron oxygenase involved in sterols biosynthesis by catalyzing the removal of the second methyl group at the C-4 position. 24-ethylidenelophenol and 24-ethyllophenol are the preferred substrates. Together with SMO2-1, required during embryogenesis, probably by maintaining sterols and auxin homeostasis. The protein is Methylsterol monooxygenase 2-2 of Arabidopsis thaliana (Mouse-ear cress).